The primary structure comprises 553 residues: Hydroxylamine reductase (553 aa).

4 residues coordinate [2Fe-2S] cluster: Cys-3, Cys-6, Cys-18, and Cys-25. Hybrid [4Fe-2O-2S] cluster contacts are provided by His-252, Glu-276, Cys-320, Cys-408, Cys-436, Cys-461, Glu-495, and Lys-497. Cys-408 is modified (cysteine persulfide).

Belongs to the HCP family. It depends on [2Fe-2S] cluster as a cofactor. The cofactor is hybrid [4Fe-2O-2S] cluster.

The protein resides in the cytoplasm. It carries out the reaction A + NH4(+) + H2O = hydroxylamine + AH2 + H(+). Catalyzes the reduction of hydroxylamine to form NH(3) and H(2)O. The sequence is that of Hydroxylamine reductase from Aliivibrio fischeri (strain ATCC 700601 / ES114) (Vibrio fischeri).